We begin with the raw amino-acid sequence, 368 residues long: Alkaline phosphatase L (368 aa).

The first 23 residues, methionine 1–alanine 23, serve as a signal peptide directing secretion.

It belongs to the PstS family. In terms of assembly, homodimer.

Its subcellular location is the secreted. The protein resides in the periplasm. The enzyme catalyses a phosphate monoester + H2O = an alcohol + phosphate. In terms of biological role, has both a phosphomonoesterase and phosphodiesterase activity. This chain is Alkaline phosphatase L, found in Pseudomonas aeruginosa (strain ATCC 15692 / DSM 22644 / CIP 104116 / JCM 14847 / LMG 12228 / 1C / PRS 101 / PAO1).